Consider the following 120-residue polypeptide: Neuromedin-B (120 aa).

A signal peptide spans 1 to 29; sequence MSAVPLTRMLPLRFLTHLLLLSFIPLYFC. The propeptide occupies 30 to 44; the sequence is MEFSEDARNIEKIRR. The residue at position 54 (M54) is a Methionine amide. Positions 58 to 120 are excised as a propeptide; the sequence is SLQDTYNPSE…MDDYIKTTQK (63 aa).

Belongs to the bombesin/neuromedin-B/ranatensin family. As to expression, brain, intestine, and ovaries and early embryos (stages 2 and 10).

Its subcellular location is the secreted. Stimulates smooth muscle contraction. The sequence is that of Neuromedin-B (nmb) from Xenopus laevis (African clawed frog).